A 730-amino-acid polypeptide reads, in one-letter code: Elongation factor 2 (730 aa).

A tr-type G domain is found at 19 to 260; the sequence is KFIRNIGIVA…MVVKHLPDPF (242 aa). GTP-binding positions include 28 to 35, 94 to 98, and 148 to 151; these read AHIDHGKT, DTPGH, and NKVD. Position 597 is a diphthamide (His-597).

It belongs to the TRAFAC class translation factor GTPase superfamily. Classic translation factor GTPase family. EF-G/EF-2 subfamily.

The protein resides in the cytoplasm. Its function is as follows. Catalyzes the GTP-dependent ribosomal translocation step during translation elongation. During this step, the ribosome changes from the pre-translocational (PRE) to the post-translocational (POST) state as the newly formed A-site-bound peptidyl-tRNA and P-site-bound deacylated tRNA move to the P and E sites, respectively. Catalyzes the coordinated movement of the two tRNA molecules, the mRNA and conformational changes in the ribosome. This chain is Elongation factor 2, found in Methanosphaerula palustris (strain ATCC BAA-1556 / DSM 19958 / E1-9c).